The primary structure comprises 1042 residues: Starch synthase 3, chloroplastic/amyloplastic (1042 aa).

The N-terminal 44 residues, 1–44 (MISYFLNQDFSRKKQGRMAASGPKSSGPRGFGRRTTVGSAQKRT), are a transit peptide targeting the chloroplast. The segment at 1 to 63 (MISYFLNQDF…NATSTATNEV (63 aa)) is disordered. Residues 54 to 63 (NATSTATNEV) show a composition bias toward polar residues. Residues 247 to 302 (ENFLLEEKLREQEKLAKEEAERERQKEEKRRIEAQKAAIEADRAQAKAETQKRREL) are a coiled coil. Lys608 is an ADP-alpha-D-glucose binding site.

The protein belongs to the glycosyltransferase 1 family. Bacterial/plant glycogen synthase subfamily. In terms of tissue distribution, expressed in leaves and flowers.

The protein resides in the plastid. It localises to the chloroplast. The protein localises to the amyloplast. The catalysed reaction is [(1-&gt;4)-alpha-D-glucosyl](n) + ADP-alpha-D-glucose = [(1-&gt;4)-alpha-D-glucosyl](n+1) + ADP + H(+). It participates in glycan biosynthesis; starch biosynthesis. In terms of biological role, involved in the synthesis of glycan chains within amylopectin in leaves. May play a regulatory role in the control of starch accumulation in plastids. This chain is Starch synthase 3, chloroplastic/amyloplastic (SS3), found in Arabidopsis thaliana (Mouse-ear cress).